A 624-amino-acid polypeptide reads, in one-letter code: Interleukin-1 receptor-associated kinase-like 2 (624 aa).

One can recognise a Death domain in the interval 13–94 (LDDLCRNIDT…RAAQIVLSWK (82 aa)). In terms of domain architecture, Protein kinase spans 210 to 475 (FDQSHRISEG…LPEACAETWA (266 aa)). ATP is bound by residues 216–224 (ISEGTFADI), Lys-237, and 337–340 (KSAN). Disordered stretches follow at residues 508 to 536 (SLPW…NSSL) and 549 to 593 (RVSS…ETSW). The span at 558 to 577 (GNGTAQPSTSGRQEADSSSE) shows a compositional bias: polar residues.

The protein belongs to the protein kinase superfamily. TKL Ser/Thr protein kinase family. Pelle subfamily. Interacts with MYD88. IL-1 stimulation leads to the formation of a signaling complex which dissociates from the IL-1 receptor following the binding of PELI1.

Binds to the IL-1 type I receptor following IL-1 engagement, triggering intracellular signaling cascades leading to transcriptional up-regulation and mRNA stabilization. The polypeptide is Interleukin-1 receptor-associated kinase-like 2 (Irak2) (Rattus norvegicus (Rat)).